The primary structure comprises 316 residues: HTH-type transcriptional regulator PecT (316 aa).

Residues 11 to 68 (LDLDLLRTFVAVADLNTFAAAAVAVCRTQSAVSQQMQRLEQLIGKELFARHGRNKLLT) form the HTH lysR-type domain. Positions 28–47 (FAAAAVAVCRTQSAVSQQMQ) form a DNA-binding region, H-T-H motif. The interval 293–316 (LPVSTGTESELREPPTDESLKDIT) is disordered. Residues 301–316 (SELREPPTDESLKDIT) are compositionally biased toward basic and acidic residues.

Belongs to the LysR transcriptional regulatory family.

Its function is as follows. Regulates pectinase gene expression. This is HTH-type transcriptional regulator PecT (pecT) from Dickeya dadantii (strain 3937) (Erwinia chrysanthemi (strain 3937)).